The primary structure comprises 209 residues: Abscisic acid receptor PYL3 (209 aa).

A disordered region spans residues 1-23 (MNLAPIHDPSSSSTTTTSSSTPY). A compositionally biased stretch (low complexity) spans 10–21 (SSSSTTTTSSST). The tract at residues 43–205 (FPRSPNTCTS…NLQNLAVIST (163 aa)) is START-like. Abscisate-binding positions include K79, 113–118 (ASTSVE), 140–146 (RLNNYRS), and E170. Positions 109-113 (SGLPA) match the Gate loop motif. Residues 139 to 141 (HRL) carry the Latch loop motif.

It belongs to the PYR/PYL/RCAR abscisic acid intracellular receptor family. As to quaternary structure, homodimer and monomer. Binds ABA on one subunit only. ABA-binding favors monomer and trans-homodimer intermediate, and increases PP2C inhibitor activity. Binds both (-)-ABA and (+)-ABA. Binds to CARs protein in an ABA-independent manner, both at the plasma membrane and in the nucleus. Interacts with HAB1, ABI1 and ABI2, and possibly with other PP2Cs.

The protein localises to the cytoplasm. Its subcellular location is the nucleus. It localises to the cell membrane. In terms of biological role, receptor for abscisic acid (ABA) required for ABA-mediated responses such as stomatal closure and germination inhibition. Inhibits the activity of group-A protein phosphatases type 2C (PP2Cs) when activated by ABA. Can be activated by both (-)-ABA and (+)-ABA. This chain is Abscisic acid receptor PYL3 (PYL3), found in Arabidopsis thaliana (Mouse-ear cress).